A 317-amino-acid chain; its full sequence is Peptidyl-prolyl cis-trans isomerase CYP26-2, chloroplastic (317 aa).

The disordered stretch occupies residues 1 to 37 (MMQPNAKLLSPSAKFLPSPIEPPQHNRRTTVGAPPSL). Positions 95–311 (FIDVSIDGEP…SKVVVTNCGL (217 aa)) constitute a PPIase cyclophilin-type domain.

Belongs to the cyclophilin-type PPIase family. In terms of tissue distribution, ubiquitous. Lower levels of expression in roots.

The protein resides in the plastid. The protein localises to the chloroplast thylakoid. The enzyme catalyses [protein]-peptidylproline (omega=180) = [protein]-peptidylproline (omega=0). Functionally, PPIases accelerate the folding of proteins. It catalyzes the cis-trans isomerization of proline imidic peptide bonds in oligopeptides. The sequence is that of Peptidyl-prolyl cis-trans isomerase CYP26-2, chloroplastic (CYP26-2) from Arabidopsis thaliana (Mouse-ear cress).